Here is a 369-residue protein sequence, read N- to C-terminus: mRNA cap guanine-N(7) methyltransferase 1 (369 aa).

The segment at 1 to 55 (MNKRPRDEPSSSFASAPKRQYGAGGGGYGGHGYSEERSSARRVADHYSARSNQTL) is disordered. Over residues 22–32 (GAGGGGYGGHG) the composition is skewed to gly residues. Over residues 33–48 (YSEERSSARRVADHYS) the composition is skewed to basic and acidic residues. The mRNA cap 0 methyltransferase domain occupies 61 to 340 (SPIIHLKKLN…LYLAFVLRKR (280 aa)). 70–71 (NN) contacts mRNA. Residues Lys74, Ala92, Asp114, 149–150 (DC), and 171–173 (QFA) each bind S-adenosyl-L-methionine.

Belongs to the class I-like SAM-binding methyltransferase superfamily. mRNA cap 0 methyltransferase family.

Its subcellular location is the nucleus. It catalyses the reaction a 5'-end (5'-triphosphoguanosine)-ribonucleoside in mRNA + S-adenosyl-L-methionine = a 5'-end (N(7)-methyl 5'-triphosphoguanosine)-ribonucleoside in mRNA + S-adenosyl-L-homocysteine. MRNA-capping methyltransferase that methylates the N7 position of the added guanosine to the 5'-cap structure of mRNAs. Binds RNA containing 5'-terminal GpppC. The protein is mRNA cap guanine-N(7) methyltransferase 1 of Oryza sativa subsp. japonica (Rice).